The following is a 420-amino-acid chain: Maturation protein A2 (420 aa).

RNA-binding stretches follow at residues 158 to 176 (IKYLGLLLRRLREGYRAVK), 226 to 236 (QNRHDKIQRLL), and 294 to 298 (PVSDW).

It belongs to the Leviviricetes maturation protein family. As to quaternary structure, interacts with host MurA; this interaction inhibits the first step in host cell wall synthesis. Interacts with the capsid protein.

The protein localises to the virion. Functionally, induces host cell lysis. Inhibits host MurA activity thereby blocking the synthesis of murein precursors necessary for the host cell wall biosynthesis. May be responsible for the attachment to the host pilus. Makes extensive contacts with the viral genome. The polypeptide is Maturation protein A2 (Escherichia virus Qbeta (Bacteriophage Q-beta)).